Reading from the N-terminus, the 384-residue chain is MDLSRPRWSLWRRVFLMASLLACGICQASGQIFITQTLGIKGYRTVVALDKVPEDVQEYSWYWGANDSAGNMIISHKPPSAQQPGPMYTGRERVNREGSLLIRPTALNDTGNYTVRVVAGNETQRATGWLEVLELGSNLGISVNASSLVENMDSVAADCLTNVTNITWYVNDVPTSSSDRMTISPDGKTLVILRVSRYDRTIQCMIESFPEIFQRSERISLTVAYGPDYVLLRSNPDDFNGIVTAEIGSQVEMECICYSFLDLKYHWIHNGSLLNFSDAKMNLSSLAWEQMGRYRCTVENPVTQLIMYMDVRIQAPHEDLTCCPQRFLHLRIHGDVPHHADSAGWRLHLWSPDPCSDQPLLNQDKSGSMSVHPRPEDKTRRASR.

Positions 1 to 30 (MDLSRPRWSLWRRVFLMASLLACGICQASG) are cleaved as a signal peptide. Asn108, Asn112, Asn121, Asn162, and Asn270 each carry an N-linked (GlcNAc...) asparagine glycan. In terms of domain architecture, Ig-like C2-type spans 227-314 (PDYVLLRSNP…LIMYMDVRIQ (88 aa)). The cysteines at positions 255 and 296 are disulfide-linked. The segment at 358-384 (QPLLNQDKSGSMSVHPRPEDKTRRASR) is disordered. Positions 359 to 369 (PLLNQDKSGSM) are enriched in polar residues. Residues 373 to 384 (PRPEDKTRRASR) show a composition bias toward basic and acidic residues.

It belongs to the immunoglobulin superfamily. CEA family.

The protein is Cell adhesion molecule CEACAM18 of Homo sapiens (Human).